The following is a 1341-amino-acid chain: DNA-directed RNA polymerase subunit Rpo1N (1341 aa).

Zn(2+)-binding residues include Cys-62, Cys-65, Cys-72, His-75, Cys-102, Cys-105, Cys-149, and Cys-152. Asp-918, Asp-920, and Asp-922 together coordinate Mg(2+).

The protein belongs to the RNA polymerase beta' chain family. Part of the RNA polymerase complex. Requires Mg(2+) as cofactor. Zn(2+) is required as a cofactor. In terms of processing, this protein undergoes a protein self splicing that involves a post-translational excision of the intervening region (intein) followed by peptide ligation.

It is found in the cytoplasm. It carries out the reaction RNA(n) + a ribonucleoside 5'-triphosphate = RNA(n+1) + diphosphate. Functionally, DNA-dependent RNA polymerase (RNAP) catalyzes the transcription of DNA into RNA using the four ribonucleoside triphosphates as substrates. Forms the clamp head domain. The protein is DNA-directed RNA polymerase subunit Rpo1N of Methanocaldococcus jannaschii (strain ATCC 43067 / DSM 2661 / JAL-1 / JCM 10045 / NBRC 100440) (Methanococcus jannaschii).